The sequence spans 257 residues: Acetylglutamate kinase (257 aa).

Residues 41 to 42 (GG), R63, and N158 each bind substrate.

It belongs to the acetylglutamate kinase family. ArgB subfamily.

The protein resides in the cytoplasm. The catalysed reaction is N-acetyl-L-glutamate + ATP = N-acetyl-L-glutamyl 5-phosphate + ADP. The protein operates within amino-acid biosynthesis; L-arginine biosynthesis; N(2)-acetyl-L-ornithine from L-glutamate: step 2/4. Catalyzes the ATP-dependent phosphorylation of N-acetyl-L-glutamate. This is Acetylglutamate kinase from Bacteroides thetaiotaomicron (strain ATCC 29148 / DSM 2079 / JCM 5827 / CCUG 10774 / NCTC 10582 / VPI-5482 / E50).